The sequence spans 164 residues: Ribosome maturation factor RimP (164 aa).

It belongs to the RimP family.

It is found in the cytoplasm. Its function is as follows. Required for maturation of 30S ribosomal subunits. The protein is Ribosome maturation factor RimP of Thermodesulfovibrio yellowstonii (strain ATCC 51303 / DSM 11347 / YP87).